Consider the following 287-residue polypeptide: 2-dehydro-3-deoxyphosphooctonate aldolase (287 aa).

Belongs to the KdsA family.

Its subcellular location is the cytoplasm. It catalyses the reaction D-arabinose 5-phosphate + phosphoenolpyruvate + H2O = 3-deoxy-alpha-D-manno-2-octulosonate-8-phosphate + phosphate. It functions in the pathway carbohydrate biosynthesis; 3-deoxy-D-manno-octulosonate biosynthesis; 3-deoxy-D-manno-octulosonate from D-ribulose 5-phosphate: step 2/3. It participates in bacterial outer membrane biogenesis; lipopolysaccharide biosynthesis. The sequence is that of 2-dehydro-3-deoxyphosphooctonate aldolase from Leptospira interrogans serogroup Icterohaemorrhagiae serovar copenhageni (strain Fiocruz L1-130).